The following is a 443-amino-acid chain: Mitochondrial enolase superfamily member 1 (443 aa).

Substrate contacts are provided by residues 24–26 (GSD) and tyrosine 34. At serine 148 the chain carries Phosphoserine. Lysine 220 is a substrate binding site. The Proton donor/acceptor role is filled by lysine 222. Position 250 (aspartate 250) interacts with Mg(2+). Substrate-binding positions include asparagine 252, glutamate 276, glutamate 305, 355-357 (HAG), and glutamate 386. Residues glutamate 276 and glutamate 305 each coordinate Mg(2+). Histidine 355 is a catalytic residue.

It belongs to the mandelate racemase/muconate lactonizing enzyme family. ENOSF1 subfamily. Requires Mg(2+) as cofactor. Could be sumoylated.

The protein resides in the mitochondrion. The enzyme catalyses L-fuconate = 2-dehydro-3-deoxy-L-fuconate + H2O. Functionally, plays a role in the catabolism of L-fucose, a sugar that is part of the carbohydrates that are attached to cellular glycoproteins. Catalyzes the dehydration of L-fuconate to 2-keto-3-deoxy-L-fuconate by the abstraction of the 2-proton to generate an enediolate intermediate that is stabilized by the magnesium ion. May down-regulate thymidylate synthase activity, possibly already at the RNA level, by promoting the degradation of TYMS mRNA via an antisense RNA-based mechanism. The chain is Mitochondrial enolase superfamily member 1 (ENOSF1) from Bos taurus (Bovine).